We begin with the raw amino-acid sequence, 281 residues long: Digeranylgeranylglyceryl phosphate synthase (281 aa).

The next 7 helical transmembrane spans lie at 14-34 (AMAAFAGLIGVLIAYNILSSA), 38-58 (VSLSLFDTSLIFAIVFLVTGA), 95-115 (LFLFITGITLAFLVNPLCGII), 149-169 (FLFGGAVFGMAGLQALVVLFL), 207-227 (ASYIAAAFGFTAMLASPVPYL), 235-255 (YLFVVAIADIFFLIAVYQILG), and 259-279 (AARSSKLFKFAMLFALISFIV).

This sequence belongs to the UbiA prenyltransferase family. DGGGP synthase subfamily. Mg(2+) is required as a cofactor.

The protein resides in the cell membrane. The enzyme catalyses sn-3-O-(geranylgeranyl)glycerol 1-phosphate + (2E,6E,10E)-geranylgeranyl diphosphate = 2,3-bis-O-(geranylgeranyl)-sn-glycerol 1-phosphate + diphosphate. Its pathway is membrane lipid metabolism; glycerophospholipid metabolism. Functionally, prenyltransferase that catalyzes the transfer of the geranylgeranyl moiety of geranylgeranyl diphosphate (GGPP) to the C2 hydroxyl of (S)-3-O-geranylgeranylglyceryl phosphate (GGGP). This reaction is the second ether-bond-formation step in the biosynthesis of archaeal membrane lipids. This is Digeranylgeranylglyceryl phosphate synthase from Methanococcoides burtonii (strain DSM 6242 / NBRC 107633 / OCM 468 / ACE-M).